A 308-amino-acid polypeptide reads, in one-letter code: Dioxygenase peniF (308 aa).

Fe cation-binding residues include histidine 144 and histidine 225.

The protein belongs to the PhyH family. In terms of assembly, homodimer. Requires Fe cation as cofactor.

Its function is as follows. Dioxygenase; part of the gene cluster that mediates the biosynthesis of penifulvin A, a potent insecticidal sesquiterpene that features a [5.5.5.6]dioxafenestrane ring. The first step of the pathway is performed by the sesquiterpene cyclase peniA that generates the angular triquinane scaffold silphinene via cyclization of the linear farnesyl pyrophosphate (FPP). The cytochrome P450 monooxygenase peniB and the flavin-dependent monooxygenase peniC then catalyze a series of oxidation reactions to transform silphinene into penifulvin A. The dioxygenases peniD and peniF, as well as the acetyltransferase peniE, do not seem to be involved in the biosynthesis of penifulvin A. This Penicillium patulum (Penicillium griseofulvum) protein is Dioxygenase peniF.